Consider the following 87-residue polypeptide: Protein L (87 aa).

In terms of biological role, this protein inhibits the multiplication of double-stranded DNA phages, such as P1 and lambda. In Escherichia coli, this protein is Protein L (L).